A 955-amino-acid polypeptide reads, in one-letter code: 26S proteasome non-ATPase regulatory subunit 1 (955 aa).

The tract at residues 279–313 (PGSTNTGTVPGSEKDSDAMEAEEKPGSTCVGKSAE) is disordered. Over residues 290-303 (SEKDSDAMEAEEKP) the composition is skewed to basic and acidic residues. 10 PC repeats span residues 403–436 (TATASLGVIHKGHEKEALQLMATYLPKDTSPGSA), 441–474 (GGLYALGLIHANHGGDIIDYLLNQLKNASNDIVR), 476–510 (GGSLGLGLAAMGTARQDVYDLLKTNLYQDDAVTGE), 511–545 (AAGLALGLVMLGSKNAQAIEDMVGYAQETQHEKIL), 547–580 (GLAVGIALVMYGRMEEADALIESLCRDKDPILRR), 581–616 (SGMYTVAMAYCGSGNNKAIRRLLHVAVSDVNDDVRR), 617–649 (AAVESLGFILFRTPEQCPSVVSLLSESYNPHVR), 651–685 (GAAMALGICCAGTGNKEAINLLEPMTNDPVNYVRQ), 686–726 (GALI…DVMA), and 729–761 (GAILAQGILDAGGHNVIISLQSRTGHTHMPSVV). Disordered stretches follow at residues 839-879 (AKKK…NFQL) and 932-955 (AHGPKIEEEEQEPEPPEPFEYIDD). Basic and acidic residues-rich tracts occupy residues 842–854 (KEKEKEKEKKEEE) and 861–874 (TEKKDEKEKKKEPE). A compositionally biased stretch (acidic residues) spans 938 to 955 (EEEEQEPEPPEPFEYIDD).

Belongs to the proteasome subunit S1 family. As to quaternary structure, component of the 19S proteasome regulatory particle complex. The 26S proteasome consists of a 20S core particle (CP) and two 19S regulatory subunits (RP). The regulatory particle is made of a lid composed of 9 subunits, a base containing 6 ATPases and few additional components including PSMD1. Interacts with ADRM1.

In terms of biological role, component of the 26S proteasome, a multiprotein complex involved in the ATP-dependent degradation of ubiquitinated proteins. This complex plays a key role in the maintenance of protein homeostasis by removing misfolded or damaged proteins, which could impair cellular functions, and by removing proteins whose functions are no longer required. Therefore, the proteasome participates in numerous cellular processes, including cell cycle progression, apoptosis, or DNA damage repair. In Gallus gallus (Chicken), this protein is 26S proteasome non-ATPase regulatory subunit 1 (PSMD1).